A 580-amino-acid chain; its full sequence is CRISPR-associated exonuclease Cas4/endonuclease Cas1 fusion (580 aa).

Residues 1–223 (MAPSDTPPSA…RCSLLPICLP (223 aa)) are CRISPR-associated exonuclease Cas4. C44 contributes to the [4Fe-4S] cluster binding site. 2 residues coordinate Mn(2+): D112 and E125. [4Fe-4S] cluster-binding residues include C212, C215, and C221. Positions 248-580 (LYGQTPGARI…IPRYPHYCPR (333 aa)) are CRISPR-associated endonuclease Cas1. Positions 401, 472, and 487 each coordinate Mn(2+).

In the N-terminal section; belongs to the CRISPR-associated exonuclease Cas4 family. It in the C-terminal section; belongs to the CRISPR-associated endonuclease Cas1 family. In terms of assembly, homodimer, forms a heterotetramer with a Cas2 homodimer. It depends on [4Fe-4S] cluster as a cofactor. Mg(2+) is required as a cofactor. Requires Mn(2+) as cofactor.

It catalyses the reaction exonucleolytic cleavage in the 5'- to 3'-direction to yield nucleoside 3'-phosphates.. In terms of biological role, CRISPR (clustered regularly interspaced short palindromic repeat), is an adaptive immune system that provides protection against mobile genetic elements (viruses, transposable elements and conjugative plasmids). CRISPR clusters contain spacers, sequences complementary to antecedent mobile elements, and target invading nucleic acids. CRISPR clusters are transcribed and processed into CRISPR RNA (crRNA). The Cas4 region acts as a ssDNA exonuclease, while the Cas1 region acts as a dsDNA endonuclease. Involved in the integration of spacer DNA into the CRISPR cassette. The protein is CRISPR-associated exonuclease Cas4/endonuclease Cas1 fusion (cas4-cas1) of Rhodospirillum rubrum (strain ATCC 11170 / ATH 1.1.1 / DSM 467 / LMG 4362 / NCIMB 8255 / S1).